A 309-amino-acid chain; its full sequence is Dioxygenase af480 (309 aa).

His153, Asp155, and His228 together coordinate Fe cation.

The protein belongs to the PhyH family. It depends on Fe cation as a cofactor.

The enzyme catalyses 5-dehydro-6-demethoxyfumagillol + 2-oxoglutarate + O2 = 5-dehydro-6-demethoxy-6-hydroxyfumagillol + succinate + CO2. Its pathway is secondary metabolite biosynthesis; terpenoid biosynthesis. Dioxygenase; part of the gene cluster that mediates the biosynthesis of fumagillin, a meroterpenoid that has numerous biological activities including irreversible inhibition of human type 2 methionine aminopeptidase (METAP2). Within the pathway, the dioxygenase af480 acts as a 5-dehydro-6-demethoxyfumagillol dioxygenase that hydroylates 5-keto-demethoxyfumagillol at position C-6. The pathway begins with the conversion of farnesyl pyrophosphate (FPP) to beta-trans-bergamotene by the membrane-bound beta-trans-bergamotene synthase af520. The multifunctional cytochrome P450 monooxygenase af510 then converts beta-trans-bergamotene into 5-keto-demethoxyfumagillol via several oxydation steps. 5-keto-demethoxyfumagillol is then subjected to successive C-6 hydroxylation and O-methylation by the dioxygenase af480 and O-methyltransferase af390-400, respectively, to yield 5-keto-fumagillol, which is then stereoselectively reduced by the keto-reductase af490 to 5R-hydroxy-seco-sesquiterpene. The next step is the polyketide transferase af380-catalyzed transfer of a dodecapentaenoyl group synthesized by the polyketide synthase af370 onto 5R-hydroxy-seco-sesquiterpene which leads to the production of prefumagillin. Finally, oxidative cleavage by the monooxygenase af470 converts prefumagillin to fumagillin. This chain is Dioxygenase af480, found in Aspergillus fumigatus (strain ATCC MYA-4609 / CBS 101355 / FGSC A1100 / Af293) (Neosartorya fumigata).